Consider the following 362-residue polypeptide: Peptide chain release factor 1 (362 aa).

N5-methylglutamine is present on Q237.

Belongs to the prokaryotic/mitochondrial release factor family. Post-translationally, methylated by PrmC. Methylation increases the termination efficiency of RF1.

It is found in the cytoplasm. In terms of biological role, peptide chain release factor 1 directs the termination of translation in response to the peptide chain termination codons UAG and UAA. The sequence is that of Peptide chain release factor 1 from Vibrio atlanticus (strain LGP32) (Vibrio splendidus (strain Mel32)).